The primary structure comprises 438 residues: V-type ATP synthase beta chain (438 aa).

The protein belongs to the ATPase alpha/beta chains family.

Functionally, produces ATP from ADP in the presence of a proton gradient across the membrane. The V-type beta chain is a regulatory subunit. In Chlamydia muridarum (strain MoPn / Nigg), this protein is V-type ATP synthase beta chain (atpB).